Reading from the N-terminus, the 374-residue chain is Chaperone protein DnaJ (374 aa).

The 66-residue stretch at 5–70 (DFYEILGVSK…EKRSAYDRMG (66 aa)) folds into the J domain. The CR-type zinc finger occupies 133–211 (GCKKEISFTA…CHGNGVKDKS (79 aa)). Residues Cys-146, Cys-149, Cys-163, Cys-166, Cys-185, Cys-188, Cys-199, and Cys-202 each coordinate Zn(2+). CXXCXGXG motif repeat units lie at residues 146-153 (CDTCDGKG), 163-170 (CQTCHGQG), 185-192 (CPHCGGTG), and 199-206 (CSDCHGNG).

The protein belongs to the DnaJ family. In terms of assembly, homodimer. It depends on Zn(2+) as a cofactor.

The protein localises to the cytoplasm. Functionally, participates actively in the response to hyperosmotic and heat shock by preventing the aggregation of stress-denatured proteins and by disaggregating proteins, also in an autonomous, DnaK-independent fashion. Unfolded proteins bind initially to DnaJ; upon interaction with the DnaJ-bound protein, DnaK hydrolyzes its bound ATP, resulting in the formation of a stable complex. GrpE releases ADP from DnaK; ATP binding to DnaK triggers the release of the substrate protein, thus completing the reaction cycle. Several rounds of ATP-dependent interactions between DnaJ, DnaK and GrpE are required for fully efficient folding. Also involved, together with DnaK and GrpE, in the DNA replication of plasmids through activation of initiation proteins. The polypeptide is Chaperone protein DnaJ (Psychrobacter arcticus (strain DSM 17307 / VKM B-2377 / 273-4)).